Here is a 284-residue protein sequence, read N- to C-terminus: MELWYTEKHTEYVKFSIKVDRELYTEQSKFQRIDILESKEFGKFFTLDGLMMVTEKDEFIYHDMIVHVPMATNPNIKNVLVIGAGDGGTIRELTRYKTIEKIDMVEIDERVVEVCKKYLPKTAGKLEEERVNIVYEDGLKFVRNKENEYDLIIVDSTDPFGPGEGLFTKEFYGNCYKALSEDGILVNQHESPYYEYYAKSMKDAHEKIQGLFKINKVYQAHIPTYPSGHWLFGFASKKYDPIKDLNAEAWNSLGLKTKYYNTDLHVGCFALPTYVIDMLNENKE.

Residues 2–237 enclose the PABS domain; the sequence is ELWYTEKHTE…GHWLFGFASK (236 aa). Gln-31 provides a ligand contact to S-methyl-5'-thioadenosine. Residues His-62 and Asp-86 each contribute to the spermidine site. Residues Glu-106 and 137 to 138 each bind S-methyl-5'-thioadenosine; that span reads DG. Catalysis depends on Asp-155, which acts as the Proton acceptor. Spermidine is bound at residue 155–158; sequence DSTD. Pro-162 is a binding site for S-methyl-5'-thioadenosine.

It belongs to the spermidine/spermine synthase family. As to quaternary structure, homodimer or homotetramer.

It localises to the cytoplasm. It catalyses the reaction S-adenosyl 3-(methylsulfanyl)propylamine + putrescine = S-methyl-5'-thioadenosine + spermidine + H(+). The protein operates within amine and polyamine biosynthesis; spermidine biosynthesis; spermidine from putrescine: step 1/1. Catalyzes the irreversible transfer of a propylamine group from the amino donor S-adenosylmethioninamine (decarboxy-AdoMet) to putrescine (1,4-diaminobutane) to yield spermidine. The sequence is that of Polyamine aminopropyltransferase from Clostridium botulinum (strain Eklund 17B / Type B).